The chain runs to 411 residues: ATP-dependent Clp protease ATP-binding subunit ClpX (411 aa).

Positions 1-49 constitute a ClpX-type ZB domain; that stretch reads MSDRDIRCSFCGRTQKEVKKLIAGPGVYICDECVKLAYDIIEEDEEEDV. Zn(2+)-binding residues include C8, C11, C30, and C33. 115–122 contributes to the ATP binding site; it reads PTGVGKTL.

This sequence belongs to the ClpX chaperone family. In terms of assembly, component of the ClpX-ClpP complex. Forms a hexameric ring that, in the presence of ATP, binds to fourteen ClpP subunits assembled into a disk-like structure with a central cavity, resembling the structure of eukaryotic proteasomes.

In terms of biological role, ATP-dependent specificity component of the Clp protease. It directs the protease to specific substrates. Can perform chaperone functions in the absence of ClpP. The protein is ATP-dependent Clp protease ATP-binding subunit ClpX of Dictyoglomus thermophilum (strain ATCC 35947 / DSM 3960 / H-6-12).